Here is a 138-residue protein sequence, read N- to C-terminus: Lutropin subunit beta (138 aa).

The signal sequence occupies residues 1–19 (RYQELTVLLLLLLEGGSWG). 6 disulfide bridges follow: C27/C75, C41/C90, C44/C128, C52/C106, C56/C108, and C111/C118. The N-linked (GlcNAc...) asparagine glycan is linked to N31.

It belongs to the glycoprotein hormones subunit beta family. Heterodimer of a common alpha chain and a unique beta chain which confers biological specificity to thyrotropin, lutropin, follitropin and gonadotropin.

Its subcellular location is the secreted. Promotes spermatogenesis and ovulation by stimulating the testes and ovaries to synthesize steroids. The sequence is that of Lutropin subunit beta (LHB) from Osphranter rufus (Red kangaroo).